The primary structure comprises 605 residues: MRIDQSIINEIKDKTDILDLVSEYVKLEKRGRNYIGLCPFHDEKTPSFTVSEDKQICHCFGCKKGGNVFQFTQEIKDISFVEAVKELGDRVNVAVDIEATQSNSNVQIASDDLQMIEMHELIQEFYYYALTKTVEGEQALTYLQERGFTDALIKERGIGFAPDSSHFCHDFLQKKGYDIELAYEAGLLSRNEENFSYYDRFRNRIMFPLKNAQGRIVGYSGRTYTGQEPKYLNSPETPIFQKRKLLYNLDKARKSIRKLDEIVLLEGFMDVIKSDTAGLKNVVATMGTQLSDEHITFIRKLTSNITLMFDGDFAGSEATLKTGQHLLQQGLNVFVIQLPSGMDPDEYIGKYGNDAFTTFVKNDKKSFAHYKVSILKDEIAHNDLSYERYLKELSHDISLMKSSILQQKAINDVAPFFNVSPEQLANEIQFNQAPANYYPEDEYGGYDEYGGYIEPEPIGMAQFDNLSRQEKAERAFLKHLMRDKDTFLNYYESVDKDNFTNQHFKYVFEVLHDFYAENDQYNISDAVQYVNSNELRETLISLEQYNLNDEPYENEIDDYVNVINEKGQETIESLNHKLREATRIGDVELQKYYLQQIVAKNKERM.

A CHC2-type zinc finger spans residues cysteine 38–cysteine 62. One can recognise a Toprim domain in the interval aspartate 260–glycine 341. Mg(2+) is bound by residues glutamate 266, aspartate 310, and aspartate 312.

This sequence belongs to the DnaG primase family. In terms of assembly, monomer. Interacts with DnaB. Requires Zn(2+) as cofactor. The cofactor is Mg(2+).

It catalyses the reaction ssDNA + n NTP = ssDNA/pppN(pN)n-1 hybrid + (n-1) diphosphate.. Functionally, RNA polymerase that catalyzes the synthesis of short RNA molecules used as primers for DNA polymerase during DNA replication. The protein is DNA primase of Staphylococcus aureus (strain Mu50 / ATCC 700699).